A 485-amino-acid polypeptide reads, in one-letter code: Glutamyl-tRNA(Gln) amidotransferase subunit A (485 aa).

Residues Lys74 and Ser149 each act as charge relay system in the active site. The active-site Acyl-ester intermediate is Ser173.

The protein belongs to the amidase family. GatA subfamily. In terms of assembly, heterotrimer of A, B and C subunits.

The enzyme catalyses L-glutamyl-tRNA(Gln) + L-glutamine + ATP + H2O = L-glutaminyl-tRNA(Gln) + L-glutamate + ADP + phosphate + H(+). Allows the formation of correctly charged Gln-tRNA(Gln) through the transamidation of misacylated Glu-tRNA(Gln) in organisms which lack glutaminyl-tRNA synthetase. The reaction takes place in the presence of glutamine and ATP through an activated gamma-phospho-Glu-tRNA(Gln). The sequence is that of Glutamyl-tRNA(Gln) amidotransferase subunit A from Herminiimonas arsenicoxydans.